A 102-amino-acid polypeptide reads, in one-letter code: Integration host factor subunit alpha (102 aa).

The segment at 49-71 is disordered; that stretch reads FGNFQLRTKPQRPGRNPKTGEEI.

This sequence belongs to the bacterial histone-like protein family. As to quaternary structure, heterodimer of an alpha and a beta chain.

In terms of biological role, this protein is one of the two subunits of integration host factor, a specific DNA-binding protein that functions in genetic recombination as well as in transcriptional and translational control. This chain is Integration host factor subunit alpha, found in Nitrosomonas eutropha (strain DSM 101675 / C91 / Nm57).